A 541-amino-acid polypeptide reads, in one-letter code: Tyrosine-protein kinase Yes (541 aa).

Basic and acidic residues predominate over residues 1–10; that stretch reads MGCIKSKENK. Positions 1 to 29 are disordered; the sequence is MGCIKSKENKSPAIKYTPENPTEPVNTSA. A lipid anchor (N-myristoyl glycine) is attached at glycine 2. Cysteine 3 carries S-palmitoyl cysteine; in membrane form lipidation. Residues 19–29 show a composition bias toward polar residues; sequence ENPTEPVNTSA. Tyrosine 32 is modified (phosphotyrosine). Positions 89 to 150 constitute an SH3 domain; that stretch reads GGVTIFVALY…PSNYVAPADS (62 aa). In terms of domain architecture, SH2 spans 156–253; the sequence is WYFGKMGRKD…GLCHKLTTVC (98 aa). Positions 275 to 528 constitute a Protein kinase domain; the sequence is LRLEVKLGQG…YIQSFLEDYF (254 aa). ATP-binding positions include 281 to 289 and lysine 303; that span reads LGQGCFGEV. 2 positions are modified to phosphotyrosine: tyrosine 334 and tyrosine 343. The Proton acceptor role is filled by aspartate 394. Tyrosine 424 is modified (phosphotyrosine; by autocatalysis). Tyrosine 535 carries the post-translational modification Phosphotyrosine.

Interacts with YAP1 and CSF1R. Interacts with FASLG. Interacts with CTNND1; this interaction allows YES1-mediated activation of FYN and FER and subsequent phosphorylation of CTNND1. Interacts with IL6ST/gp130. Interacts with SCRIB, when YES1 is in a closed conformation; the interaction facilitates YES1 autophosphorylation. In terms of processing, phosphorylated. Phosphorylation by CSK on the C-terminal tail maintains the enzyme in an inactive state. Autophosphorylation at Tyr-424 maintains enzyme activity by blocking CSK-mediated inhibition. Post-translationally, palmitoylation at Cys-3 promotes membrane localization.

It localises to the cell membrane. The protein localises to the cytoplasm. The protein resides in the cytoskeleton. Its subcellular location is the microtubule organizing center. It is found in the centrosome. It localises to the cytosol. The protein localises to the cell junction. It catalyses the reaction L-tyrosyl-[protein] + ATP = O-phospho-L-tyrosyl-[protein] + ADP + H(+). Functionally, non-receptor protein tyrosine kinase that is involved in the regulation of cell growth and survival, apoptosis, cell-cell adhesion, cytoskeleton remodeling, and differentiation. Stimulation by receptor tyrosine kinases (RTKs) including EGFR, PDGFR, CSF1R and FGFR leads to recruitment of YES1 to the phosphorylated receptor, and activation and phosphorylation of downstream substrates. Upon EGFR activation, promotes the phosphorylation of PARD3 to favor epithelial tight junction assembly. Participates in the phosphorylation of specific junctional components such as CTNND1 by stimulating the FYN and FER tyrosine kinases at cell-cell contacts. Upon T-cell stimulation by CXCL12, phosphorylates collapsin response mediator protein 2/DPYSL2 and induces T-cell migration. Participates in CD95L/FASLG signaling pathway and mediates AKT-mediated cell migration. Plays a role in cell cycle progression by phosphorylating the cyclin dependent kinase 4/CDK4 thus regulating the G1 phase. Also involved in G2/M progression and cytokinesis. Catalyzes phosphorylation of organic cation transporter OCT2 which induces its transport activity. The sequence is that of Tyrosine-protein kinase Yes (Yes1) from Rattus norvegicus (Rat).